The sequence spans 663 residues: Transketolase 2 (663 aa).

H25 is a substrate binding site. Residues H65 and 113–115 (GPL) each bind thiamine diphosphate. D154 serves as a coordination point for Mg(2+). 2 residues coordinate thiamine diphosphate: G155 and N184. Mg(2+) is bound by residues N184 and I186. Residues H259, R356, and S383 each coordinate substrate. Residue H259 coordinates thiamine diphosphate. E410 acts as the Proton donor in catalysis. A thiamine diphosphate-binding site is contributed by F436. Positions 460, 468, and 519 each coordinate substrate.

Belongs to the transketolase family. Homodimer. The cofactor is Mg(2+). It depends on Ca(2+) as a cofactor. Mn(2+) serves as cofactor. Co(2+) is required as a cofactor. Requires thiamine diphosphate as cofactor.

It carries out the reaction D-sedoheptulose 7-phosphate + D-glyceraldehyde 3-phosphate = aldehydo-D-ribose 5-phosphate + D-xylulose 5-phosphate. Catalyzes the transfer of a two-carbon ketol group from a ketose donor to an aldose acceptor, via a covalent intermediate with the cofactor thiamine pyrophosphate. The sequence is that of Transketolase 2 (tkt2) from Aliivibrio fischeri (strain ATCC 700601 / ES114) (Vibrio fischeri).